Consider the following 338-residue polypeptide: DNA-directed RNA polymerase subunit alpha (338 aa).

Residues 1-234 (MIQKNWQELT…DQLNVFVNFE (234 aa)) form an alpha N-terminal domain (alpha-NTD) region. Positions 250–338 (FNPALLKKVD…DLAKRFEEHY (89 aa)) are alpha C-terminal domain (alpha-CTD).

The protein belongs to the RNA polymerase alpha chain family. As to quaternary structure, homodimer. The RNAP catalytic core consists of 2 alpha, 1 beta, 1 beta' and 1 omega subunit. When a sigma factor is associated with the core the holoenzyme is formed, which can initiate transcription.

It catalyses the reaction RNA(n) + a ribonucleoside 5'-triphosphate = RNA(n+1) + diphosphate. Its function is as follows. DNA-dependent RNA polymerase catalyzes the transcription of DNA into RNA using the four ribonucleoside triphosphates as substrates. In Methylocella silvestris (strain DSM 15510 / CIP 108128 / LMG 27833 / NCIMB 13906 / BL2), this protein is DNA-directed RNA polymerase subunit alpha.